The chain runs to 143 residues: Transcriptional regulator MraZ (143 aa).

SpoVT-AbrB domains follow at residues 5-47 (EYQH…PLTE) and 76-119 (AMEG…AKER).

Belongs to the MraZ family. As to quaternary structure, forms oligomers.

The protein resides in the cytoplasm. The protein localises to the nucleoid. The chain is Transcriptional regulator MraZ from Lactobacillus delbrueckii subsp. bulgaricus (strain ATCC 11842 / DSM 20081 / BCRC 10696 / JCM 1002 / NBRC 13953 / NCIMB 11778 / NCTC 12712 / WDCM 00102 / Lb 14).